Here is a 393-residue protein sequence, read N- to C-terminus: Branched-chain-amino-acid aminotransferase, mitochondrial (393 aa).

The N-terminal 16 residues, 1–16 (MLQRHSLKLGKFSIRT), are a transit peptide targeting the mitochondrion. Lys219 is subject to N6-(pyridoxal phosphate)lysine. Thr315 is modified (phosphothreonine).

It belongs to the class-IV pyridoxal-phosphate-dependent aminotransferase family. Pyridoxal 5'-phosphate serves as cofactor.

It is found in the mitochondrion matrix. The catalysed reaction is L-leucine + 2-oxoglutarate = 4-methyl-2-oxopentanoate + L-glutamate. It catalyses the reaction L-isoleucine + 2-oxoglutarate = (S)-3-methyl-2-oxopentanoate + L-glutamate. The enzyme catalyses L-valine + 2-oxoglutarate = 3-methyl-2-oxobutanoate + L-glutamate. It carries out the reaction a 2-oxocarboxylate + L-methionine = 4-methylsulfanyl-2-oxobutanoate + an L-alpha-amino acid. It functions in the pathway amino-acid biosynthesis; L-isoleucine biosynthesis; L-isoleucine from 2-oxobutanoate: step 4/4. Its pathway is amino-acid biosynthesis; L-leucine biosynthesis; L-leucine from 3-methyl-2-oxobutanoate: step 4/4. The protein operates within amino-acid biosynthesis; L-valine biosynthesis; L-valine from pyruvate: step 4/4. It participates in amino-acid biosynthesis; L-methionine biosynthesis via salvage pathway; L-methionine from S-methyl-5-thio-alpha-D-ribose 1-phosphate: step 6/6. Its function is as follows. Mitochondrial isozyme of branched-chain-amino-acid aminotransferase, involved in the biosynthesis of the branched chain amino acids (BCAAs) leucine, isoleucine, and valine. Catalyzes the formation of methionine from 2-keto-4-methylthiobutyrate (KMTB) in the methionine salvage pathway primarily using BCAAs (leucine, isoleucine, and valine) as the amino donors. Appears to be involved in the regulation of the cell cycle, although this may be indirect via metabolic changes. Connects BCAAs and TCA-cycle metabolism governing TCA-cycle flux to activate TORC1 signaling. High copy suppressor of a temperature-sensitive mutation in the ABC transporter, ATM1. The protein is Branched-chain-amino-acid aminotransferase, mitochondrial of Saccharomyces cerevisiae (strain ATCC 204508 / S288c) (Baker's yeast).